The primary structure comprises 257 residues: Dihydroorotate dehydrogenase B (NAD(+)), electron transfer subunit (257 aa).

The region spanning 2-101 (IRQEKMRVVS…LGPIGNGFPV (100 aa)) is the FAD-binding FR-type domain. FAD contacts are provided by residues 52 to 55 (RPIS), 69 to 71 (IYR), and 76 to 77 (GT). Residues C220, C225, C228, and C244 each contribute to the [2Fe-2S] cluster site.

Belongs to the PyrK family. As to quaternary structure, heterotetramer of 2 PyrK and 2 PyrD type B subunits. It depends on [2Fe-2S] cluster as a cofactor. The cofactor is FAD.

The protein operates within pyrimidine metabolism; UMP biosynthesis via de novo pathway; orotate from (S)-dihydroorotate (NAD(+) route): step 1/1. Functionally, responsible for channeling the electrons from the oxidation of dihydroorotate from the FMN redox center in the PyrD type B subunit to the ultimate electron acceptor NAD(+). This is Dihydroorotate dehydrogenase B (NAD(+)), electron transfer subunit from Lysinibacillus sphaericus (strain C3-41).